Consider the following 277-residue polypeptide: Zinc transporter ZupT (277 aa).

Helical transmembrane passes span 7-27 (VLLA…GSAI), 38-58 (FLAV…FVEI), 73-93 (VLAS…IAVI), 133-155 (AGVL…AFSA), 165-187 (AIAV…PIYY), 196-216 (FLYS…GYVV), 220-240 (FFTP…MVYI), and 257-277 (LCIL…LLFL). Asparagine 145 and glutamate 148 together coordinate Fe(2+). Positions 148 and 173 each coordinate Zn(2+). The Fe(2+) site is built by asparagine 174, glutamate 177, and glutamate 206. Glutamate 177 contributes to the Zn(2+) binding site.

Belongs to the ZIP transporter (TC 2.A.5) family. ZupT subfamily.

It localises to the cell inner membrane. It catalyses the reaction Zn(2+)(in) = Zn(2+)(out). Its function is as follows. Mediates zinc uptake. May also transport other divalent cations. This chain is Zinc transporter ZupT, found in Nitratidesulfovibrio vulgaris (strain ATCC 29579 / DSM 644 / CCUG 34227 / NCIMB 8303 / VKM B-1760 / Hildenborough) (Desulfovibrio vulgaris).